Reading from the N-terminus, the 318-residue chain is GTP 3',8-cyclase (318 aa).

One can recognise a Radical SAM core domain in the interval 5–217; it reads KFERKIDYIR…DKIAKKYKFK (213 aa). R14 is a binding site for GTP. [4Fe-4S] cluster contacts are provided by C21 and C25. Y27 provides a ligand contact to S-adenosyl-L-methionine. C28 provides a ligand contact to [4Fe-4S] cluster. Residue R64 coordinates GTP. G68 is an S-adenosyl-L-methionine binding site. T95 is a binding site for GTP. S119 lines the S-adenosyl-L-methionine pocket. K155 contacts GTP. M189 contributes to the S-adenosyl-L-methionine binding site. Residues C248 and C251 each contribute to the [4Fe-4S] cluster site. 253 to 255 is a binding site for GTP; sequence RIR. C265 is a binding site for [4Fe-4S] cluster.

The protein belongs to the radical SAM superfamily. MoaA family. As to quaternary structure, monomer and homodimer. It depends on [4Fe-4S] cluster as a cofactor.

The catalysed reaction is GTP + AH2 + S-adenosyl-L-methionine = (8S)-3',8-cyclo-7,8-dihydroguanosine 5'-triphosphate + 5'-deoxyadenosine + L-methionine + A + H(+). Its pathway is cofactor biosynthesis; molybdopterin biosynthesis. Its function is as follows. Catalyzes the cyclization of GTP to (8S)-3',8-cyclo-7,8-dihydroguanosine 5'-triphosphate. The polypeptide is GTP 3',8-cyclase (Nautilia profundicola (strain ATCC BAA-1463 / DSM 18972 / AmH)).